The following is a 379-amino-acid chain: 2-nitroimidazole nitrohydrolase (379 aa).

Residue Cys357 is the Amidino-cysteine intermediate of the active site.

This sequence belongs to the arginine deiminase family.

The catalysed reaction is 2-nitroimidazole + H2O = 1,3-dihydro-2H-imidazol-2-one + nitrite + H(+). Functionally, involved in the biodegradation of 2-Nitroimidazole (2NI) which is a natural antibiotic and an analog of the synthetic nitroimidazoles used for treatment of tuberculosis, Chagas disease (also called American Trypanosomiasis) and cancer. Catalyzes the hydrolytic denitration of 2NI to produce imidazol-2-one and nitrite. It is also active against the 2NI synthetic derivative benznidazole. NnhA confers drug resistance to 2NI. In Mycobacterium sp. (strain JS330), this protein is 2-nitroimidazole nitrohydrolase (nnhA).